Reading from the N-terminus, the 880-residue chain is Alanine--tRNA ligase (880 aa).

Zn(2+) is bound by residues His-568, His-572, Cys-670, and His-674.

The protein belongs to the class-II aminoacyl-tRNA synthetase family. Requires Zn(2+) as cofactor.

Its subcellular location is the cytoplasm. The catalysed reaction is tRNA(Ala) + L-alanine + ATP = L-alanyl-tRNA(Ala) + AMP + diphosphate. Functionally, catalyzes the attachment of alanine to tRNA(Ala) in a two-step reaction: alanine is first activated by ATP to form Ala-AMP and then transferred to the acceptor end of tRNA(Ala). Also edits incorrectly charged Ser-tRNA(Ala) and Gly-tRNA(Ala) via its editing domain. This is Alanine--tRNA ligase from Enterococcus faecalis (strain ATCC 700802 / V583).